A 259-amino-acid polypeptide reads, in one-letter code: L-cysteine S-thiosulfotransferase subunit SoxA (259 aa).

The N-terminal stretch at 1–23 (MRKLWFLPILLGAVGGVSLYAIA) is a signal peptide. Residues 50–135 (VYAEQGRDMF…SIATYVATLS (86 aa)) form the Cytochrome c domain. Residues cysteine 70, cysteine 73, histidine 74, cysteine 108, cysteine 171, cysteine 174, and histidine 175 each coordinate heme c. Substrate is bound at residue arginine 216. Residue cysteine 220 participates in heme c binding. The active-site Cysteine persulfide intermediate is the cysteine 220.

Belongs to the SoxA family. In terms of assembly, heterodimer of SoxA and SoxX. The cofactor is heme c. In terms of processing, cysteine persulfide at Cys-220.

It is found in the periplasm. It catalyses the reaction L-cysteinyl-[SoxY protein] + thiosulfate + 2 Fe(III)-[cytochrome c] = S-sulfosulfanyl-L-cysteinyl-[SoxY protein] + 2 Fe(II)-[cytochrome c] + 2 H(+). It carries out the reaction S-sulfanyl-L-cysteinyl-[SoxY protein] + thiosulfate + 2 Fe(III)-[cytochrome c] = S-(2-sulfodisulfanyl)-L-cysteinyl-[SoxY protein] + 2 Fe(II)-[cytochrome c] + 2 H(+). In terms of biological role, C-type diheme cytochrome, which is part of the SoxAX cytochrome complex involved in sulfur oxidation. The SoxAX complex catalyzes the formation of a heterodisulfide bond between the conserved cysteine residue on a sulfur carrier SoxYZ complex subunit SoxY and thiosulfate or other inorganic sulfur substrates. This leads to the liberation of two electrons, which may be transferred from the SoxAX complex to another cytochrome c that then channels them into the respiratory electron transport chain. Some electrons may be used for reductive CO(2) fixation. The chain is L-cysteine S-thiosulfotransferase subunit SoxA from Hydrogenobacter thermophilus (strain DSM 6534 / IAM 12695 / TK-6).